The sequence spans 166 residues: NADH-quinone oxidoreductase subunit A (166 aa).

The next 3 helical transmembrane spans lie at 16–36 (FAVFLIGAVGLCGLMLLGAYF), 68–88 (FYLVAMFFVIFDVEALYLYAW), and 98–118 (IGFIEAAIFILVLLAGLFYLV). Residues 141–166 (RYASSHPQDISQELSVAGSQQANESR) are disordered.

It belongs to the complex I subunit 3 family. NDH-1 is composed of 13 different subunits. Subunits NuoA, H, J, K, L, M, N constitute the membrane sector of the complex.

It localises to the cell inner membrane. It carries out the reaction a quinone + NADH + 5 H(+)(in) = a quinol + NAD(+) + 4 H(+)(out). NDH-1 shuttles electrons from NADH, via FMN and iron-sulfur (Fe-S) centers, to quinones in the respiratory chain. The immediate electron acceptor for the enzyme in this species is believed to be ubiquinone. Couples the redox reaction to proton translocation (for every two electrons transferred, four hydrogen ions are translocated across the cytoplasmic membrane), and thus conserves the redox energy in a proton gradient. This Yersinia pseudotuberculosis serotype O:1b (strain IP 31758) protein is NADH-quinone oxidoreductase subunit A.